The primary structure comprises 819 residues: Serine/threonine-protein phosphatase 1 regulatory subunit 10 (819 aa).

The TFIIS N-terminal domain maps to 73–147 (KLLNNWLTYA…NDWMAVIRSQ (75 aa)). Disordered stretches follow at residues 151–204 (QPAD…KFRS), 296–391 (KIKK…RKTV), and 495–785 (SVPD…GGDM). 2 stretches are compositionally biased toward basic and acidic residues: residues 153-165 (ADKE…EDAK) and 173-190 (KTSE…EKPK). Polar residues predominate over residues 305-327 (SPTSNKASPFDSKSPTEASSLTK). Positions 386–415 (KKRKTVSWPEESRLREYFYFELDETERVNV) match the PP1-binding motif motif. The span at 495–504 (SVPDTPHEPD) shows a compositional bias: basic and acidic residues. Composition is skewed to polar residues over residues 533 to 543 (MDQSTESQSPD) and 560 to 578 (MGSS…QEIL). A compositionally biased stretch (basic and acidic residues) spans 589–604 (KPEDLMKQPDFSEKIK). The segment covering 606–618 (LLGSLQNQNQNQG) has biased composition (low complexity). Composition is skewed to pro residues over residues 635–663 (FPPP…PGPN) and 670–695 (HGPP…PPPN). 2 stretches are compositionally biased toward basic and acidic residues: residues 704–715 (HGGERGGMRGGD) and 758–777 (HGDH…GDHR). Residues 785–813 (MSTRPTCRHFMMKGNCRYENNCAFYHPGI) form a C3H1-type zinc finger.

Component of the PNUTS-PP1 complex (also named PTW/PP1 complex).

It is found in the nucleus. The protein resides in the chromosome. Its function is as follows. Substrate-recognition component of the PNUTS-PP1 protein phosphatase complex, a protein phosphatase 1 (PP1) complex that promotes RNA polymerase II transcription pause-release, allowing transcription elongation. Promoter-proximal pausing by RNA polymerase II is a transcription halt following transcription initiation but prior to elongation, which acts as a checkpoint to control that transcripts are favorably configured for transcriptional elongation. The PNUTS-PP1 complex mediates the release of RNA polymerase II from promoter-proximal region of genes by catalyzing dephosphorylation of proteins involved in transcription. In some context, PPP1R10/PNUTS also acts as an inhibitor of protein phosphatase 1 (PP1) activity by preventing access to substrates. The sequence is that of Serine/threonine-protein phosphatase 1 regulatory subunit 10 (ppp1r10) from Xenopus laevis (African clawed frog).